Here is a 131-residue protein sequence, read N- to C-terminus: Profilin-7 (131 aa).

Cys13 and Cys115 are oxidised to a cystine. The Involved in PIP2 interaction motif lies at 81–97; the sequence is AVIRGKKGAGGITIKKT. Thr111 is subject to Phosphothreonine.

It belongs to the profilin family. In terms of assembly, occurs in many kinds of cells as a complex with monomeric actin in a 1:1 ratio. Post-translationally, phosphorylated by MAP kinases.

It is found in the cytoplasm. The protein localises to the cytoskeleton. Its function is as follows. Binds to actin and affects the structure of the cytoskeleton. At high concentrations, profilin prevents the polymerization of actin, whereas it enhances it at low concentrations. The chain is Profilin-7 from Phleum pratense (Common timothy).